Consider the following 261-residue polypeptide: tRNA pseudouridine synthase A (261 aa).

The Nucleophile role is filled by aspartate 51. Tyrosine 109 contributes to the substrate binding site.

The protein belongs to the tRNA pseudouridine synthase TruA family. In terms of assembly, homodimer.

The catalysed reaction is uridine(38/39/40) in tRNA = pseudouridine(38/39/40) in tRNA. In terms of biological role, formation of pseudouridine at positions 38, 39 and 40 in the anticodon stem and loop of transfer RNAs. This is tRNA pseudouridine synthase A from Shewanella denitrificans (strain OS217 / ATCC BAA-1090 / DSM 15013).